Reading from the N-terminus, the 117-residue chain is Immunoglobulin heavy variable 4-28 (117 aa).

The first 19 residues, 1-19 (MKHLWFFLLLVAAPRWVLS), serve as a signal peptide directing secretion. The tract at residues 20–44 (QVQLQESGPGLVKPSDTLSLTCAVS) is framework-1. The region spanning 20-117 (QVQLQESGPG…VDTAVYYCAR (98 aa)) is the Ig-like domain. The cysteines at positions 41 and 115 are disulfide-linked. The interval 45 to 53 (GYSISSSNW) is complementarity-determining-1. Positions 54–70 (WGWIRQPPGKGLEWIGY) are framework-2. The segment at 71-77 (IYYSGST) is complementarity-determining-2. A framework-3 region spans residues 78–115 (YYNPSLKSRVTMSVDTSKNQFSLKLSSVTAVDTAVYYC). The interval 116–117 (AR) is complementarity-determining-3.

Immunoglobulins are composed of two identical heavy chains and two identical light chains; disulfide-linked.

Its subcellular location is the secreted. It is found in the cell membrane. In terms of biological role, v region of the variable domain of immunoglobulin heavy chains that participates in the antigen recognition. Immunoglobulins, also known as antibodies, are membrane-bound or secreted glycoproteins produced by B lymphocytes. In the recognition phase of humoral immunity, the membrane-bound immunoglobulins serve as receptors which, upon binding of a specific antigen, trigger the clonal expansion and differentiation of B lymphocytes into immunoglobulins-secreting plasma cells. Secreted immunoglobulins mediate the effector phase of humoral immunity, which results in the elimination of bound antigens. The antigen binding site is formed by the variable domain of one heavy chain, together with that of its associated light chain. Thus, each immunoglobulin has two antigen binding sites with remarkable affinity for a particular antigen. The variable domains are assembled by a process called V-(D)-J rearrangement and can then be subjected to somatic hypermutations which, after exposure to antigen and selection, allow affinity maturation for a particular antigen. This chain is Immunoglobulin heavy variable 4-28, found in Homo sapiens (Human).